A 445-amino-acid chain; its full sequence is Cyclic GMP-AMP phosphodiesterase SMPDL3A (445 aa).

The signal sequence occupies residues 1–22 (MALLGNFLCCLLVAWLCGPGLG). Zn(2+) contacts are provided by Asp42 and His44. Cys59 and Cys78 are oxidised to a cystine. A glycan (N-linked (GlcNAc...) asparagine) is linked at Asn66. Asp107 contacts Zn(2+). ATP is bound at residue His111. The N-linked (GlcNAc...) asparagine glycan is linked to Asn128. Zn(2+) is bound at residue Asn148. ATP is bound by residues Asn148 and His149. N-linked (GlcNAc...) asparagine glycans are attached at residues Asn219 and Asn235. Position 249 (His249) interacts with Zn(2+). Tyr257 contacts ATP. Zn(2+)-binding residues include His290 and His292. N-linked (GlcNAc...) asparagine glycosylation is found at Asn353 and Asn364. 2 disulfides stabilise this stretch: Cys417/Cys421 and Cys427/Cys440.

It belongs to the acid sphingomyelinase family. As to quaternary structure, monomer. Homodimer; homodimerizes following 2',3'-cGAMP-binding. Requires Zn(2+) as cofactor. Post-translationally, N-glycosylated. In terms of tissue distribution, detected in blood serum (at protein level).

It is found in the secreted. It catalyses the reaction 2',3'-cGAMP + H2O = 5'-pGpA(2'-5') + H(+). The enzyme catalyses 5'-pGpA(2'-5') + H2O = 5'-GpA(2'-5') + phosphate. The catalysed reaction is a ribonucleoside 5'-triphosphate + H2O = a ribonucleoside 5'-diphosphate + phosphate + H(+). It carries out the reaction ATP + H2O = ADP + phosphate + H(+). With respect to regulation, requires micromolar levels of Zn(2+) for activity. Inhibited by millimolar levels of Zn(2+). Cyclic-nucleotide phosphodiesterase that acts as a negative regulator of innate immunity by mediating degradation of 2',3'-cGAMP, thereby inhibiting the cGAS-STING signaling. Specifically linearizes 2',3'-cGAMP into 2'5'-bond pGpA and further hydrolyzes pGpA to produce GpA. Also has in vitro nucleotide phosphodiesterase activity with nucleoside triphosphates, such as ATP. Has in vitro activity with p-nitrophenyl-TMP. Has lower activity with nucleoside diphosphates, and no activity with nucleoside monophosphates. Has in vitro activity with CDP-choline, giving rise to CMP and phosphocholine. Has in vitro activity with CDP-ethanolamine. Does not have sphingomyelin phosphodiesterase activity. The polypeptide is Cyclic GMP-AMP phosphodiesterase SMPDL3A (Mus musculus (Mouse)).